The chain runs to 218 residues: MTDTMAETMKQTVASILKSIERYNPANLEILERYVEMQSRENTYDWGANLAVLKLYQFNPEKFNADITCQILLKALTNFPHTDFTLCKCLLLESVVENETISQIKYLADILEQCDFAQFGNRVHQMPELCSRISGFHDSIRKFVCHVVGITFQTIDKNNLANLLGGIDDVTLKHWVKKYGWRDDGSLIFIANQDENIKTKNITEKIEFDHLAPLMALL.

A PCI domain is found at 44 to 205 (YDWGANLAVL…NIKTKNITEK (162 aa)).

The protein belongs to the eIF-3 subunit K family. Component of the eukaryotic translation initiation factor 3 (eIF-3) complex.

It localises to the cytoplasm. In terms of biological role, component of the eukaryotic translation initiation factor 3 (eIF-3) complex, which is involved in protein synthesis of a specialized repertoire of mRNAs and, together with other initiation factors, stimulates binding of mRNA and methionyl-tRNAi to the 40S ribosome. The eIF-3 complex specifically targets and initiates translation of a subset of mRNAs involved in cell proliferation. This is Eukaryotic translation initiation factor 3 subunit K from Bombyx mori (Silk moth).